We begin with the raw amino-acid sequence, 91 residues long: Acyl-CoA-binding domain-containing protein 2 (91 aa).

Residues 3-88 (LQEEFEEFAE…VKQLLEEASA (86 aa)) enclose the ACB domain. An acyl-CoA-binding positions include Lys15, 30–34 (YGLYK), Lys52, Lys56, and Tyr75.

Belongs to the ACBP family. Highly expressed in leaves. Expressed at low levels in roots and seeds.

It is found in the cytoplasm. The protein resides in the cytosol. Functionally, binds medium- and long-chain acyl-CoA esters with high affinity. Can interact in vitro with linolenoyl-CoA. Binds palmitoyl-CoA and linoleoyl-CoA in vitro. Binds phosphatidic acid (PA) and phosphatidylcholine (PC) in vitro. May play a role in the biosynthesis of phospholipids. This chain is Acyl-CoA-binding domain-containing protein 2, found in Oryza sativa subsp. japonica (Rice).